Here is a 111-residue protein sequence, read N- to C-terminus: Small ribosomal subunit protein bS16 (111 aa).

It belongs to the bacterial ribosomal protein bS16 family.

This Rickettsia bellii (strain OSU 85-389) protein is Small ribosomal subunit protein bS16.